A 208-amino-acid polypeptide reads, in one-letter code: Protein-L-isoaspartate O-methyltransferase (208 aa).

S59 is an active-site residue.

It belongs to the methyltransferase superfamily. L-isoaspartyl/D-aspartyl protein methyltransferase family.

The protein resides in the cytoplasm. It carries out the reaction [protein]-L-isoaspartate + S-adenosyl-L-methionine = [protein]-L-isoaspartate alpha-methyl ester + S-adenosyl-L-homocysteine. Its function is as follows. Catalyzes the methyl esterification of L-isoaspartyl residues in peptides and proteins that result from spontaneous decomposition of normal L-aspartyl and L-asparaginyl residues. It plays a role in the repair and/or degradation of damaged proteins. The sequence is that of Protein-L-isoaspartate O-methyltransferase from Yersinia enterocolitica serotype O:8 / biotype 1B (strain NCTC 13174 / 8081).